The sequence spans 89 residues: Large ribosomal subunit protein eL43 (89 aa).

The Zn(2+) site is built by Cys38, Cys41, Cys56, and Cys59. The segment at 38 to 59 adopts a C4-type zinc-finger fold; that stretch reads CPSCDRPGVKRESRGIWKCRKC.

It belongs to the eukaryotic ribosomal protein eL43 family. Putative zinc-binding subfamily. In terms of assembly, part of the 50S ribosomal subunit. Requires Zn(2+) as cofactor.

Its function is as follows. Binds to the 23S rRNA. This Methanothermobacter thermautotrophicus (strain ATCC 29096 / DSM 1053 / JCM 10044 / NBRC 100330 / Delta H) (Methanobacterium thermoautotrophicum) protein is Large ribosomal subunit protein eL43.